The primary structure comprises 242 residues: Tryptophan synthase alpha chain (242 aa).

Catalysis depends on proton acceptor residues Glu-31 and Asp-42.

The protein belongs to the TrpA family. In terms of assembly, tetramer of two alpha and two beta chains.

It carries out the reaction (1S,2R)-1-C-(indol-3-yl)glycerol 3-phosphate + L-serine = D-glyceraldehyde 3-phosphate + L-tryptophan + H2O. The protein operates within amino-acid biosynthesis; L-tryptophan biosynthesis; L-tryptophan from chorismate: step 5/5. In terms of biological role, the alpha subunit is responsible for the aldol cleavage of indoleglycerol phosphate to indole and glyceraldehyde 3-phosphate. The polypeptide is Tryptophan synthase alpha chain (Staphylococcus aureus (strain Mu3 / ATCC 700698)).